A 631-amino-acid chain; its full sequence is uncharacterized protein (631 aa).

The next 9 helical transmembrane spans lie at 42–62, 76–96, 106–128, 152–172, 344–364, 366–386, 398–418, 429–449, and 464–484; these read VLVG…IGGF, ALKL…GTLL, VLGL…GPAP, AGLT…GWLW, ALKY…FGFA, SYWI…VFTL, IGVI…YIAF, MLIV…ALVI, and IARL…TMLL.

The protein belongs to the YccS/YhfK family.

It is found in the cell membrane. This is an uncharacterized protein from Bacillus subtilis (strain 168).